The primary structure comprises 1322 residues: Transcription elongation factor SPT6-like (1322 aa).

Positions 1-17 (MNRIDEEPQIHEDPVEN) are enriched in basic and acidic residues. Disordered regions lie at residues 1–65 (MNRI…KKDE) and 90–113 (KRLK…DLSH). The span at 18-33 (REEDDEDEDDQYEFDD) shows a compositional bias: acidic residues. Positions 48–65 (EQRHCSEKKSRSRRKKDE) are enriched in basic and acidic residues. Over residues 97–110 (EEEDKINNDDDDDD) the composition is skewed to acidic residues. One can recognise an S1 motif domain in the interval 1017-1088 (GRIVQATVKK…QRYHVLLVCK (72 aa)).

This sequence belongs to the SPT6 family.

The protein localises to the nucleus. Functionally, transcription elongation factor that enhances the transcription elongation by RNA polymerase II (RNAPII). This is Transcription elongation factor SPT6-like from Arabidopsis thaliana (Mouse-ear cress).